The chain runs to 343 residues: MIVDHIGNLSDALKGKKSTFALVIGTTDVSLIPGITVAGATPELTMFTPAADAEYLITGSCKVIKGVPVTPDGIPTPALLSRASLSLINVNKLVVNAGARVTPKIPFVDLHGEPGRDIRKGGVRKEVAENIIANATVLGENLSEEVLVVGESIPAGTTTAAAVLTGLGFNGVEIVSSSSPNNPKELKRKVVEEAVRSAPRDTTERIYWLADPVILAVAGLAMGFRGLTILAGGTQMAAVSAVIKELSPEKLNSVGIITTKWIINDTTARLMELVKTLGVKLSHANLDLSQSQHEGLRVYERGFVKEGVGAGGAMALAMANGVTSENLVKKIDAFYSDLINAQR.

The protein belongs to the UPF0284 family.

The protein is UPF0284 protein Msed_0735 of Metallosphaera sedula (strain ATCC 51363 / DSM 5348 / JCM 9185 / NBRC 15509 / TH2).